We begin with the raw amino-acid sequence, 39 residues long: LIM/homeobox protein xLIM-2B (39 aa).

Residues 1–39 constitute a DNA-binding region (homeobox); that stretch reads KAKQLETLKAAFAATPKPTRHIREQLAQETGLNMRVIQV.

It is found in the nucleus. The chain is LIM/homeobox protein xLIM-2B (lim2b) from Xenopus laevis (African clawed frog).